Here is a 269-residue protein sequence, read N- to C-terminus: MSNKVHLGHTARKRFGQNFLTDSNVINRIVGAISPDNDHVMVEIGPGLAALTEPVAESIDKLTVVELDKDLVERLQTHPFLKDKLEIHQGDALKFDFKQLVEEGKQMKVFGNLPYNISTPLMFHLFEFAEHIENMHFMLQKEVVLRLSAAPGTKAYGRLTVMAQYFCQVMPVLEVPPGCFTPPPKVDSAVVRLVPYKEKPYPCKDVDLLRHLCTTAFNMRRKTLRNNLKQLLNDDDFSALGIDASMRPEQITVQQYVAMANHLVDKRQA.

The S-adenosyl-L-methionine site is built by N18, L20, G45, E66, D91, and N112.

The protein belongs to the class I-like SAM-binding methyltransferase superfamily. rRNA adenine N(6)-methyltransferase family. RsmA subfamily.

Its subcellular location is the cytoplasm. The enzyme catalyses adenosine(1518)/adenosine(1519) in 16S rRNA + 4 S-adenosyl-L-methionine = N(6)-dimethyladenosine(1518)/N(6)-dimethyladenosine(1519) in 16S rRNA + 4 S-adenosyl-L-homocysteine + 4 H(+). Functionally, specifically dimethylates two adjacent adenosines (A1518 and A1519) in the loop of a conserved hairpin near the 3'-end of 16S rRNA in the 30S particle. May play a critical role in biogenesis of 30S subunits. This Shewanella loihica (strain ATCC BAA-1088 / PV-4) protein is Ribosomal RNA small subunit methyltransferase A.